The primary structure comprises 143 residues: Large ribosomal subunit protein uL11 (143 aa).

Belongs to the universal ribosomal protein uL11 family. Part of the ribosomal stalk of the 50S ribosomal subunit. Interacts with L10 and the large rRNA to form the base of the stalk. L10 forms an elongated spine to which L12 dimers bind in a sequential fashion forming a multimeric L10(L12)X complex. Post-translationally, one or more lysine residues are methylated.

Forms part of the ribosomal stalk which helps the ribosome interact with GTP-bound translation factors. This chain is Large ribosomal subunit protein uL11, found in Variovorax paradoxus (strain S110).